The primary structure comprises 153 residues: Large ribosomal subunit protein uL13 (153 aa).

The protein belongs to the universal ribosomal protein uL13 family. Part of the 50S ribosomal subunit.

In terms of biological role, this protein is one of the early assembly proteins of the 50S ribosomal subunit, although it is not seen to bind rRNA by itself. It is important during the early stages of 50S assembly. The chain is Large ribosomal subunit protein uL13 from Methylobacterium sp. (strain 4-46).